The following is a 140-amino-acid chain: Ribonuclease P protein component (140 aa).

This sequence belongs to the RnpA family. As to quaternary structure, consists of a catalytic RNA component (M1 or rnpB) and a protein subunit.

The catalysed reaction is Endonucleolytic cleavage of RNA, removing 5'-extranucleotides from tRNA precursor.. Functionally, RNaseP catalyzes the removal of the 5'-leader sequence from pre-tRNA to produce the mature 5'-terminus. It can also cleave other RNA substrates such as 4.5S RNA. The protein component plays an auxiliary but essential role in vivo by binding to the 5'-leader sequence and broadening the substrate specificity of the ribozyme. This is Ribonuclease P protein component from Ralstonia pickettii (strain 12J).